The following is a 493-amino-acid chain: UDP-N-acetylmuramoyl-L-alanyl-D-glutamate--L-lysine ligase (493 aa).

S30 is a UDP-N-acetyl-alpha-D-muramoyl-L-alanyl-D-glutamate binding site. 110-116 (GTNGKTS) lines the ATP pocket. Residues N151, 152–153 (TT), S179, and R187 each bind UDP-N-acetyl-alpha-D-muramoyl-L-alanyl-D-glutamate. K219 carries the N6-carboxylysine modification. The L-lysine recognition motif motif lies at 406-409 (DNPA).

It belongs to the MurCDEF family. MurE subfamily. Mg(2+) is required as a cofactor. In terms of processing, carboxylation is probably crucial for Mg(2+) binding and, consequently, for the gamma-phosphate positioning of ATP.

The protein localises to the cytoplasm. The enzyme catalyses UDP-N-acetyl-alpha-D-muramoyl-L-alanyl-D-glutamate + L-lysine + ATP = UDP-N-acetyl-alpha-D-muramoyl-L-alanyl-gamma-D-glutamyl-L-lysine + ADP + phosphate + H(+). It functions in the pathway cell wall biogenesis; peptidoglycan biosynthesis. Its function is as follows. Catalyzes the addition of L-lysine to the nucleotide precursor UDP-N-acetylmuramoyl-L-alanyl-D-glutamate (UMAG) in the biosynthesis of bacterial cell-wall peptidoglycan. Cannot use diaminopimelate as substrate. Can accept L-ornithine as substrate, but the efficiency is 400-fold lower than that with L-lysine. Seems to have a role in beta-lactam antibiotic resistance. In Staphylococcus aureus (strain NCTC 8325 / PS 47), this protein is UDP-N-acetylmuramoyl-L-alanyl-D-glutamate--L-lysine ligase.